A 442-amino-acid polypeptide reads, in one-letter code: Sexual development regulator VELC (442 aa).

2 disordered regions span residues 1-192 (MPVH…ASLA) and 396-442 (KKGN…IRRS). The span at 45 to 54 (IAPPPPPTPP) shows a compositional bias: pro residues. Over residues 79-97 (PGPRRPSNPSSPQHPQQPG) the composition is skewed to low complexity. Residues 213–396 (FSTSEYHLHV…KEQGCLISIK (184 aa)) enclose the Velvet domain. Residues 401 to 411 (KGGGGGGGGPS) show a composition bias toward gly residues. Residues 433-442 (AGKRKRIRRS) are compositionally biased toward basic residues.

Belongs to the velvet family. VelC subfamily.

The protein localises to the nucleus. Functionally, velvet-domain-containing protein that acts as a positive regulator of sexual development. Plays an important role in pathogenicity through regulating positively appressorium-mediated penetration and invasive growth. This chain is Sexual development regulator VELC, found in Pyricularia oryzae (strain 70-15 / ATCC MYA-4617 / FGSC 8958) (Rice blast fungus).